Here is a 232-residue protein sequence, read N- to C-terminus: Phosphatidylserine decarboxylase proenzyme (232 aa).

The active-site Schiff-base intermediate with substrate; via pyruvic acid is the Ser-190. A Pyruvic acid (Ser); by autocatalysis modification is found at Ser-190.

Belongs to the phosphatidylserine decarboxylase family. PSD-A subfamily. In terms of assembly, heterodimer of a large membrane-associated beta subunit and a small pyruvoyl-containing alpha subunit. It depends on pyruvate as a cofactor. Post-translationally, is synthesized initially as an inactive proenzyme. Formation of the active enzyme involves a self-maturation process in which the active site pyruvoyl group is generated from an internal serine residue via an autocatalytic post-translational modification. Two non-identical subunits are generated from the proenzyme in this reaction, and the pyruvate is formed at the N-terminus of the alpha chain, which is derived from the carboxyl end of the proenzyme. The post-translation cleavage follows an unusual pathway, termed non-hydrolytic serinolysis, in which the side chain hydroxyl group of the serine supplies its oxygen atom to form the C-terminus of the beta chain, while the remainder of the serine residue undergoes an oxidative deamination to produce ammonia and the pyruvoyl prosthetic group on the alpha chain.

The protein resides in the cell membrane. It catalyses the reaction a 1,2-diacyl-sn-glycero-3-phospho-L-serine + H(+) = a 1,2-diacyl-sn-glycero-3-phosphoethanolamine + CO2. It participates in phospholipid metabolism; phosphatidylethanolamine biosynthesis; phosphatidylethanolamine from CDP-diacylglycerol: step 2/2. Functionally, catalyzes the formation of phosphatidylethanolamine (PtdEtn) from phosphatidylserine (PtdSer). In Cereibacter sphaeroides (strain ATCC 17023 / DSM 158 / JCM 6121 / CCUG 31486 / LMG 2827 / NBRC 12203 / NCIMB 8253 / ATH 2.4.1.) (Rhodobacter sphaeroides), this protein is Phosphatidylserine decarboxylase proenzyme.